Here is a 77-residue protein sequence, read N- to C-terminus: Acyl carrier protein (77 aa).

A Carrier domain is found at 1–76 (MSVEQRVKEI…DVLDYIKSKQ (76 aa)). S36 is modified (O-(pantetheine 4'-phosphoryl)serine).

The protein belongs to the acyl carrier protein (ACP) family. 4'-phosphopantetheine is transferred from CoA to a specific serine of apo-ACP by AcpS. This modification is essential for activity because fatty acids are bound in thioester linkage to the sulfhydryl of the prosthetic group.

It localises to the cytoplasm. The protein operates within lipid metabolism; fatty acid biosynthesis. Functionally, carrier of the growing fatty acid chain in fatty acid biosynthesis. In Sulfurihydrogenibium sp. (strain YO3AOP1), this protein is Acyl carrier protein.